Consider the following 156-residue polypeptide: MSRRNAAVKRPVLPDPQFNNRLATMLVARLMKHGKKSTAQRILSDAFSLIGERTGGDPIELFETAVKNATPLVEVRARRVGGATYQVPMEVRQERGTAMALRWLVSFSRARNGRSMAQKLAGELMDAANEAGSAVRKREETHKMAEANKAFAHYRY.

Belongs to the universal ribosomal protein uS7 family. As to quaternary structure, part of the 30S ribosomal subunit. Contacts proteins S9 and S11.

One of the primary rRNA binding proteins, it binds directly to 16S rRNA where it nucleates assembly of the head domain of the 30S subunit. Is located at the subunit interface close to the decoding center, probably blocks exit of the E-site tRNA. In Synechococcus sp. (strain WH7803), this protein is Small ribosomal subunit protein uS7.